A 191-amino-acid chain; its full sequence is Ankyrin repeat domain-containing protein 22 (191 aa).

ANK repeat units lie at residues 39–68, 72–100, 101–130, and 134–163; these read NGDTPLICACRRGHLRIVSFLLRRNADVNL, KERTCLHYAVKKRFTFFDYLLIILLMPVL, LIGYFLMVSKTKQNETLVRMLLNAGVEVNA, and DGYTALHYACQMKNQTLIPLLLEAHADPMI.

The sequence is that of Ankyrin repeat domain-containing protein 22 (Ankrd22) from Mus musculus (Mouse).